A 428-amino-acid chain; its full sequence is Tyrosine--tRNA ligase (428 aa).

Residue Tyr-41 participates in L-tyrosine binding. The short motif at Pro-46–His-55 is the 'HIGH' region element. L-tyrosine-binding residues include Tyr-179 and Gln-183. Positions Lys-239–Thr-243 match the 'KMSKS' region motif. An ATP-binding site is contributed by Lys-242. The S4 RNA-binding domain occupies Ala-361–Gly-418.

It belongs to the class-I aminoacyl-tRNA synthetase family. TyrS type 1 subfamily. As to quaternary structure, homodimer.

It localises to the cytoplasm. The enzyme catalyses tRNA(Tyr) + L-tyrosine + ATP = L-tyrosyl-tRNA(Tyr) + AMP + diphosphate + H(+). Catalyzes the attachment of tyrosine to tRNA(Tyr) in a two-step reaction: tyrosine is first activated by ATP to form Tyr-AMP and then transferred to the acceptor end of tRNA(Tyr). In Klebsiella pneumoniae subsp. pneumoniae (strain ATCC 700721 / MGH 78578), this protein is Tyrosine--tRNA ligase.